Reading from the N-terminus, the 176-residue chain is Tubulin polymerization-promoting protein family member 3 (176 aa).

Residues 132-151 (TGSHKERFDQTGKGKGKSGR) form a disordered region. The span at 134 to 151 (SHKERFDQTGKGKGKSGR) shows a compositional bias: basic and acidic residues.

It belongs to the TPPP family.

It is found in the cytoplasm. The protein resides in the cytoskeleton. Its function is as follows. Regulator of microtubule dynamic that has microtubule bundling activity. The protein is Tubulin polymerization-promoting protein family member 3 (tppp3) of Xenopus laevis (African clawed frog).